Consider the following 293-residue polypeptide: Ribosomal RNA small subunit methyltransferase A (293 aa).

Residues Asn38, Val40, Gly65, Glu86, Asp116, and Asn133 each coordinate S-adenosyl-L-methionine.

It belongs to the class I-like SAM-binding methyltransferase superfamily. rRNA adenine N(6)-methyltransferase family. RsmA subfamily.

The protein localises to the cytoplasm. It carries out the reaction adenosine(1518)/adenosine(1519) in 16S rRNA + 4 S-adenosyl-L-methionine = N(6)-dimethyladenosine(1518)/N(6)-dimethyladenosine(1519) in 16S rRNA + 4 S-adenosyl-L-homocysteine + 4 H(+). Functionally, specifically dimethylates two adjacent adenosines (A1518 and A1519) in the loop of a conserved hairpin near the 3'-end of 16S rRNA in the 30S particle. May play a critical role in biogenesis of 30S subunits. The protein is Ribosomal RNA small subunit methyltransferase A of Paenarthrobacter aurescens (strain TC1).